We begin with the raw amino-acid sequence, 228 residues long: LexA repressor (228 aa).

Residues 26–46 (FDEMKDALDLRSKSGIHRLIT) constitute a DNA-binding region (H-T-H motif). Residues Ser-149 and Lys-187 each act as for autocatalytic cleavage activity in the active site.

Belongs to the peptidase S24 family. Homodimer.

The enzyme catalyses Hydrolysis of Ala-|-Gly bond in repressor LexA.. In terms of biological role, represses a number of genes involved in the response to DNA damage (SOS response), including recA and lexA. In the presence of single-stranded DNA, RecA interacts with LexA causing an autocatalytic cleavage which disrupts the DNA-binding part of LexA, leading to derepression of the SOS regulon and eventually DNA repair. This is LexA repressor from Cereibacter sphaeroides (strain ATCC 17025 / ATH 2.4.3) (Rhodobacter sphaeroides).